Here is a 79-residue protein sequence, read N- to C-terminus: EAMZP30-47 protein (79 aa).

A compositionally biased stretch (low complexity) spans 1–12; that stretch reads HAASPRGRPQQR. Positions 1-47 are disordered; that stretch reads HAASPRGRPQQRSSRHGAEGPDTTRRGSCCSSSSSCCRPSTPRHPHN. Basic and acidic residues predominate over residues 16 to 25; it reads HGAEGPDTTR. Residues 28–37 are compositionally biased toward low complexity; it reads SCCSSSSSCC.

It localises to the membrane. The protein localises to the cell membrane. It is found in the cytoplasmic vesicle. Its subcellular location is the secretory vesicle. The protein resides in the rhoptry. This Eimeria acervulina (Coccidian parasite) protein is EAMZP30-47 protein (CMC17).